The sequence spans 210 residues: N-(5'-phosphoribosyl)anthranilate isomerase (210 aa).

It belongs to the TrpF family.

The enzyme catalyses N-(5-phospho-beta-D-ribosyl)anthranilate = 1-(2-carboxyphenylamino)-1-deoxy-D-ribulose 5-phosphate. It functions in the pathway amino-acid biosynthesis; L-tryptophan biosynthesis; L-tryptophan from chorismate: step 3/5. This Crocosphaera subtropica (strain ATCC 51142 / BH68) (Cyanothece sp. (strain ATCC 51142)) protein is N-(5'-phosphoribosyl)anthranilate isomerase.